Consider the following 445-residue polypeptide: Dolichyl-diphosphooligosaccharide--protein glycosyltransferase 48 kDa subunit (445 aa).

The N-terminal stretch at Met1–Ala20 is a signal peptide. The Lumenal portion of the chain corresponds to Asp21–Pro405. Residues Tyr406 to Tyr426 traverse the membrane as a helical segment. The Cytoplasmic portion of the chain corresponds to His427–Asn445.

Belongs to the DDOST 48 kDa subunit family. As to quaternary structure, component of the oligosaccharyltransferase (OST) complex.

Its subcellular location is the endoplasmic reticulum membrane. Its pathway is protein modification; protein glycosylation. In terms of biological role, subunit of the oligosaccharyl transferase (OST) complex that catalyzes the initial transfer of a defined glycan (Glc(3)Man(9)GlcNAc(2) in eukaryotes) from the lipid carrier dolichol-pyrophosphate to an asparagine residue within an Asn-X-Ser/Thr consensus motif in nascent polypeptide chains, the first step in protein N-glycosylation. N-glycosylation occurs cotranslationally and the complex associates with the Sec61 complex at the channel-forming translocon complex that mediates protein translocation across the endoplasmic reticulum (ER). All subunits are required for a maximal enzyme activity. Required for the assembly of both SST3A- and SS3B-containing OST complexes. Required for normal lifespan. The chain is Dolichyl-diphosphooligosaccharide--protein glycosyltransferase 48 kDa subunit from Caenorhabditis elegans.